The following is a 73-amino-acid chain: DNA-directed RNA polymerase subunit epsilon (73 aa).

Belongs to the RNA polymerase subunit epsilon family. In terms of assembly, RNAP is composed of a core of 2 alpha, a beta and a beta' subunit. The core is associated with a delta subunit, and at least one of epsilon or omega. When a sigma factor is associated with the core the holoenzyme is formed, which can initiate transcription.

The catalysed reaction is RNA(n) + a ribonucleoside 5'-triphosphate = RNA(n+1) + diphosphate. Functionally, a non-essential component of RNA polymerase (RNAP). This Lactobacillus acidophilus (strain ATCC 700396 / NCK56 / N2 / NCFM) protein is DNA-directed RNA polymerase subunit epsilon.